Consider the following 305-residue polypeptide: MARTADDSWDPASSVGATATMVAAGRAAASADPDPLINDPYAEPLVRAVGLSFFTKMLDGELDLSQFADGSPERVQAMIDGMAVRTRFFDDCCGTSTTAGITQVVILASGLDARAYRLGWPAGTVVYELDQPAVIEFKTRTLAGLGAHPTATHRPVPIDLREDWPAALHAAGFDASRPTAWLAEGLLIYLPPEAQDQLFDRITALSAPGSTIATEYAPGIIDFDDEKARAMSAPMREMGLDIDMPSLVYAGTRSHVMDYLAGQGWEVTGVPRRELFTRYGRPLPPEAGDTDPLGEIVYVSAHRPQ.

S-adenosyl-L-methionine-binding positions include aspartate 130 and 159–160; that span reads DL.

The protein belongs to the UPF0677 family.

Exhibits S-adenosyl-L-methionine-dependent methyltransferase activity. This is Putative S-adenosyl-L-methionine-dependent methyltransferase Mvan_1344 from Mycolicibacterium vanbaalenii (strain DSM 7251 / JCM 13017 / BCRC 16820 / KCTC 9966 / NRRL B-24157 / PYR-1) (Mycobacterium vanbaalenii).